The chain runs to 83 residues: Hainantoxin-III 7 (83 aa).

The signal sequence occupies residues methionine 1–alanine 21. The propeptide occupies serine 22–arginine 48. 3 disulfides stabilise this stretch: cysteine 50-cysteine 65, cysteine 57-cysteine 70, and cysteine 64-cysteine 77. Leucine 81 carries the leucine amide modification.

Belongs to the neurotoxin 10 (Hwtx-1) family. 15 (Hntx-3) subfamily. Monomer. As to expression, expressed by the venom gland.

It localises to the secreted. Functionally, selective antagonist of neuronal tetrodotoxin (TTX)-sensitive voltage-gated sodium channels (IC(50)=1270 nM on Nav1.1/SCN1A, 270 nM on Nav1.2/SCN2A, 491 nM on Nav1.3/SCN3A and 232 nM on Nav1.7/SCN9A). This toxin suppress Nav1.7 current amplitude without significantly altering the activation, inactivation, and repriming kinetics. Short extreme depolarizations partially activate the toxin-bound channel, indicating voltage-dependent inhibition of this toxin. This toxin increases the deactivation of the Nav1.7 current after extreme depolarizations. The toxin-Nav1.7 complex is gradually dissociated upon prolonged strong depolarizations in a voltage-dependent manner, and the unbound toxin rebinds to Nav1.7 after a long repolarization. Moreover, analysis of chimeric channels showed that the DIIS3-S4 linker is critical for toxin binding to Nav1.7. These data are consistent with this toxin interacting with Nav1.7 site 4 and trapping the domain II voltage sensor in the closed state. The polypeptide is Hainantoxin-III 7 (Cyriopagopus hainanus (Chinese bird spider)).